A 532-amino-acid chain; its full sequence is 2-isopropylmalate synthase (532 aa).

The region spanning 5–267 (VIIFDTTLRD…HTNINHQEIY (263 aa)) is the Pyruvate carboxyltransferase domain. Positions 14, 202, 204, and 238 each coordinate Mn(2+). Residues 392–532 (HLDYFSVQSG…SKQQNSQETV (141 aa)) form a regulatory domain region. The segment at 513 to 532 (QQHNNQQQNDSKQQNSQETV) is disordered.

The protein belongs to the alpha-IPM synthase/homocitrate synthase family. LeuA type 1 subfamily. Homodimer. Mn(2+) serves as cofactor.

It localises to the cytoplasm. It catalyses the reaction 3-methyl-2-oxobutanoate + acetyl-CoA + H2O = (2S)-2-isopropylmalate + CoA + H(+). Its pathway is amino-acid biosynthesis; L-leucine biosynthesis; L-leucine from 3-methyl-2-oxobutanoate: step 1/4. In terms of biological role, catalyzes the condensation of the acetyl group of acetyl-CoA with 3-methyl-2-oxobutanoate (2-ketoisovalerate) to form 3-carboxy-3-hydroxy-4-methylpentanoate (2-isopropylmalate). The sequence is that of 2-isopropylmalate synthase from Pectobacterium atrosepticum (strain SCRI 1043 / ATCC BAA-672) (Erwinia carotovora subsp. atroseptica).